A 234-amino-acid polypeptide reads, in one-letter code: BTB/POZ domain-containing protein KCTD5 (234 aa).

Ala2 carries the N-acetylalanine modification. At Ser10 the chain carries Phosphoserine. The region spanning 44 to 146 is the BTB domain; the sequence is KWVRLNVGGT…LVKDKIRERD (103 aa). Residues 213 to 234 form a disordered region; sequence PYGTASEPSEKAKILQERGSRM. Over residues 220-234 the composition is skewed to basic and acidic residues; that stretch reads PSEKAKILQERGSRM.

Homopentamer. Interacts (via C-terminus) with GRASP55/GORASP2. Interacts with CUL3 and with ubiquitinated proteins. Interacts with CRY1. As to quaternary structure, (Microbial infection) Interacts with adeno-associated virus 2 (AAV-2) REP proteins.

The protein localises to the cytoplasm. It is found in the cytosol. The protein resides in the nucleus. Its function is as follows. Its interaction with CUL3 suggests that it may act as a substrate adapter in some E3 ligase complex. Does not affect the function of Kv channel Kv2.1/KCNB1, Kv1.2/KCNA2, Kv4.2/KCND2 and Kv3.4/KCNC4. The protein is BTB/POZ domain-containing protein KCTD5 (KCTD5) of Homo sapiens (Human).